The primary structure comprises 91 residues: uncharacterized protein (91 aa).

3 consecutive transmembrane segments (helical) span residues 6–26 (AAAVFSITIPIISAILIINFF), 37–57 (MPVFFPLLLSPIGIILAFVSI), and 68–88 (IVLNAIMFPFPFFWFIGGALL).

Its subcellular location is the cell membrane. This is an uncharacterized protein from Bacillus subtilis (strain 168).